The primary structure comprises 254 residues: Phosphoribosylaminoimidazole-succinocarboxamide synthase (254 aa).

Belongs to the SAICAR synthetase family.

The catalysed reaction is 5-amino-1-(5-phospho-D-ribosyl)imidazole-4-carboxylate + L-aspartate + ATP = (2S)-2-[5-amino-1-(5-phospho-beta-D-ribosyl)imidazole-4-carboxamido]succinate + ADP + phosphate + 2 H(+). It participates in purine metabolism; IMP biosynthesis via de novo pathway; 5-amino-1-(5-phospho-D-ribosyl)imidazole-4-carboxamide from 5-amino-1-(5-phospho-D-ribosyl)imidazole-4-carboxylate: step 1/2. The sequence is that of Phosphoribosylaminoimidazole-succinocarboxamide synthase from Sinorhizobium medicae (strain WSM419) (Ensifer medicae).